The sequence spans 532 residues: Amidophosphoribosyltransferase 3, chloroplastic (532 aa).

A chloroplast-targeting transit peptide spans 1–59; the sequence is MAFSVEEISSILPNSLSANPRNVSQNTISPSFFKPSLKPYASKTLISLSCRRSLSPVFS. C77 serves as the catalytic Nucleophile. Positions 77 to 296 constitute a Glutamine amidotransferase type-2 domain; sequence CGVVGIHGDP…PGEIVVVDRN (220 aa). [4Fe-4S] cluster contacts are provided by C313, C459, C511, and C514.

In the C-terminal section; belongs to the purine/pyrimidine phosphoribosyltransferase family. The cofactor is [4Fe-4S] cluster. Mg(2+) serves as cofactor. Mostly expressed at low levels in leaves, and, to a lower extent, in cotyledons.

The protein localises to the plastid. The protein resides in the chloroplast stroma. The enzyme catalyses 5-phospho-beta-D-ribosylamine + L-glutamate + diphosphate = 5-phospho-alpha-D-ribose 1-diphosphate + L-glutamine + H2O. It functions in the pathway purine metabolism; IMP biosynthesis via de novo pathway; N(1)-(5-phospho-D-ribosyl)glycinamide from 5-phospho-alpha-D-ribose 1-diphosphate: step 1/2. With respect to regulation, inhibited by the phenyltriazole acetic acid compound [5-(4-chlorophenyl)-1-isopropyl-1H-[1,2,4]triazol-3-yl]-acetic acid (DAS734), a bleaching herbicide. Repressed by AMP, ADP, ATP and GTP, and slightly by GMP. Its function is as follows. Catalyzes the first committed step of 'de novo' purine biosynthesis from glutamine. In Arabidopsis thaliana (Mouse-ear cress), this protein is Amidophosphoribosyltransferase 3, chloroplastic (ASE3).